Consider the following 270-residue polypeptide: tRNA pseudouridine synthase A (270 aa).

The active-site Nucleophile is Asp52. Tyr110 provides a ligand contact to substrate.

Belongs to the tRNA pseudouridine synthase TruA family. In terms of assembly, homodimer.

The enzyme catalyses uridine(38/39/40) in tRNA = pseudouridine(38/39/40) in tRNA. Its function is as follows. Formation of pseudouridine at positions 38, 39 and 40 in the anticodon stem and loop of transfer RNAs. This Paraburkholderia xenovorans (strain LB400) protein is tRNA pseudouridine synthase A.